Reading from the N-terminus, the 103-residue chain is Large ribosomal subunit protein bL21 (103 aa).

The protein belongs to the bacterial ribosomal protein bL21 family. Part of the 50S ribosomal subunit. Contacts protein L20.

In terms of biological role, this protein binds to 23S rRNA in the presence of protein L20. This Clostridium beijerinckii (strain ATCC 51743 / NCIMB 8052) (Clostridium acetobutylicum) protein is Large ribosomal subunit protein bL21.